Reading from the N-terminus, the 417-residue chain is Candidapepsin-4 (417 aa).

Positions 1–18 (MFLQNILSVLAFALLIDA) are cleaved as a signal peptide. Residues 19 to 75 (APVKRSTGFVTLDFNVKRSLVDPKDPTVEVKRSPLFLDIEPTEIPVDDTGRNDVGKR) constitute a propeptide, activation peptide. Residues 89 to 403 (YSADITIGSN…DLDDRKISMA (315 aa)) enclose the Peptidase A1 domain. Residue aspartate 107 is part of the active site. A disulfide bridge connects residues cysteine 122 and cysteine 134. Residue asparagine 137 is glycosylated (N-linked (GlcNAc...) asparagine). Residue aspartate 293 is part of the active site. A disulfide bridge links cysteine 331 with cysteine 369.

Belongs to the peptidase A1 family. In terms of processing, O-glycosylated.

The protein localises to the secreted. It carries out the reaction Preferential cleavage at the carboxyl of hydrophobic amino acids, but fails to cleave 15-Leu-|-Tyr-16, 16-Tyr-|-Leu-17 and 24-Phe-|-Phe-25 of insulin B chain. Activates trypsinogen, and degrades keratin.. In Candida albicans (strain WO-1) (Yeast), this protein is Candidapepsin-4 (SAP4).